Here is a 959-residue protein sequence, read N- to C-terminus: MYFYFFNKYNLKILEKKLLIIFKYNISFKILHELLYLGYEYSFLYNYSLNIKDFSNFIYLLILYKNKINNIYNNKYYEIKNNYINVFLNNYYYLKVINKIQGILNNNLYNKINPIYSNLFLFFNNKIKIKYSQLQQLIGYKGYISNIKGMIYEKPVINNYINELNIYEYILSCYGSKKGIIDTALKTADSGYLTKRLINITSNFIIKELNCKSPFILKYILNMDIYGNIILPLNILRFKILQNNILNLNNGTFIYTKNTYITKYILNKLLNLYNRRNIYLNIKSVYLCNIYNNICNTCLNYKQLYKYNLGQHIGVISSEAISEPSTQMVLRTFHASSILKDKFNFNKYLIYKIYLYKLNINKIFKLIINFKKYINIKFNLIFLMNKILYNYNNILFEYKYILQNQYIKCNFIYNSISKNFKYNLNNIIIKYLNNVIKYYNYSNIQLLIKNIHNKWILYNIYTYYLYYYHIKFYNLYNKGIILNNNNNKYNVIYFLINYFNLFSNYYYKIYNNNYNFINSNYYFKMNFILKNFNNIQILNKLFYVNNIFIYYKYEKKLFIYLNIINNIIIKKYLNFYKYTYNKLFFIKKYNNFLYLYEIFKYNWYKYLLLNNKYNLYIIYNNYIKYLYKYNININLYFIKNLFYNNNNFIHNHIIYKNNYYIYNNNMNLYQYNKNILINNNLLYNKLFYNYINNNIYNLYLNDITIGLQSINIIFENKNIKDNIFFISNNIYVIFYIKYYNYLNNIIYIYNICNKYNINHYKYKLNFYSYIFEDISSILYSGYSLHTEFYSINKNLKYYFRFLLKSINIYQATKSSYIYVYNILIESILKQYSYQNIYLPSIYFELIIKKMLSCIKIISNNFKIFKYNDIISLQLINIINYSLNLNKHYIYKYEPIILGITKSILANSGFLTNISFQNTFKIISLNILNNKIDWLIDIKSKIILTDLLPVGNGWYRYLVN.

Cys-211, Cys-288, Cys-295, and Cys-298 together coordinate Zn(2+).

Belongs to the RNA polymerase beta' chain family. RpoC2 subfamily. In plastids the minimal PEP RNA polymerase catalytic core is composed of four subunits: alpha, beta, beta', and beta''. When a (nuclear-encoded) sigma factor is associated with the core the holoenzyme is formed, which can initiate transcription. Zn(2+) serves as cofactor.

Its subcellular location is the plastid. The protein resides in the apicoplast. It carries out the reaction RNA(n) + a ribonucleoside 5'-triphosphate = RNA(n+1) + diphosphate. Its function is as follows. DNA-dependent RNA polymerase catalyzes the transcription of DNA into RNA using the four ribonucleoside triphosphates as substrates. The chain is DNA-directed RNA polymerase subunit beta'' from Plasmodium falciparum (isolate 3D7).